The chain runs to 207 residues: Thiamine-phosphate synthase (207 aa).

Residues 38-42 (QYRAK) and asparagine 70 contribute to the 4-amino-2-methyl-5-(diphosphooxymethyl)pyrimidine site. Residues aspartate 71 and aspartate 90 each contribute to the Mg(2+) site. Threonine 109 contacts 4-amino-2-methyl-5-(diphosphooxymethyl)pyrimidine. Residue 135–137 (TNS) participates in 2-[(2R,5Z)-2-carboxy-4-methylthiazol-5(2H)-ylidene]ethyl phosphate binding. Lysine 138 lines the 4-amino-2-methyl-5-(diphosphooxymethyl)pyrimidine pocket. 2-[(2R,5Z)-2-carboxy-4-methylthiazol-5(2H)-ylidene]ethyl phosphate is bound by residues glycine 165 and 185 to 186 (IS).

The protein belongs to the thiamine-phosphate synthase family. It depends on Mg(2+) as a cofactor.

It catalyses the reaction 2-[(2R,5Z)-2-carboxy-4-methylthiazol-5(2H)-ylidene]ethyl phosphate + 4-amino-2-methyl-5-(diphosphooxymethyl)pyrimidine + 2 H(+) = thiamine phosphate + CO2 + diphosphate. The enzyme catalyses 2-(2-carboxy-4-methylthiazol-5-yl)ethyl phosphate + 4-amino-2-methyl-5-(diphosphooxymethyl)pyrimidine + 2 H(+) = thiamine phosphate + CO2 + diphosphate. It carries out the reaction 4-methyl-5-(2-phosphooxyethyl)-thiazole + 4-amino-2-methyl-5-(diphosphooxymethyl)pyrimidine + H(+) = thiamine phosphate + diphosphate. Its pathway is cofactor biosynthesis; thiamine diphosphate biosynthesis; thiamine phosphate from 4-amino-2-methyl-5-diphosphomethylpyrimidine and 4-methyl-5-(2-phosphoethyl)-thiazole: step 1/1. Its function is as follows. Condenses 4-methyl-5-(beta-hydroxyethyl)thiazole monophosphate (THZ-P) and 2-methyl-4-amino-5-hydroxymethyl pyrimidine pyrophosphate (HMP-PP) to form thiamine monophosphate (TMP). This is Thiamine-phosphate synthase from Clostridium perfringens (strain SM101 / Type A).